A 217-amino-acid chain; its full sequence is MLO-like protein (217 aa).

3 helical membrane-spanning segments follow: residues 35-55 (FKVVVGISPILWFFAVLFLLS), 59-79 (GWVAYLWLPFIPLIIILVVGT), and 119-139 (LVLFLIHFCLFQNAFQLAFFI).

It belongs to the MLO family.

The protein localises to the membrane. In terms of biological role, may be involved in modulation of pathogen defense and leaf cell death. The polypeptide is MLO-like protein (Linum usitatissimum (Flax)).